A 210-amino-acid chain; its full sequence is Dephospho-CoA kinase (210 aa).

In terms of domain architecture, DPCK spans 4 to 202 (WVGLTGGIGS…AFYSGIFASK (199 aa)). 12–17 (GSGKSA) provides a ligand contact to ATP.

It belongs to the CoaE family.

The protein resides in the cytoplasm. It catalyses the reaction 3'-dephospho-CoA + ATP = ADP + CoA + H(+). Its pathway is cofactor biosynthesis; coenzyme A biosynthesis; CoA from (R)-pantothenate: step 5/5. In terms of biological role, catalyzes the phosphorylation of the 3'-hydroxyl group of dephosphocoenzyme A to form coenzyme A. This is Dephospho-CoA kinase from Neisseria meningitidis serogroup A / serotype 4A (strain DSM 15465 / Z2491).